We begin with the raw amino-acid sequence, 407 residues long: Probable tRNA sulfurtransferase (407 aa).

The region spanning 61 to 165 is the THUMP domain; sequence NEITYRLSKI…LDAIYMYEEV (105 aa). ATP-binding positions include 183–184, 208–209, Arg265, Gly287, and Gln296; these read ML and HF.

This sequence belongs to the ThiI family.

It localises to the cytoplasm. The enzyme catalyses [ThiI sulfur-carrier protein]-S-sulfanyl-L-cysteine + a uridine in tRNA + 2 reduced [2Fe-2S]-[ferredoxin] + ATP + H(+) = [ThiI sulfur-carrier protein]-L-cysteine + a 4-thiouridine in tRNA + 2 oxidized [2Fe-2S]-[ferredoxin] + AMP + diphosphate. It carries out the reaction [ThiS sulfur-carrier protein]-C-terminal Gly-Gly-AMP + S-sulfanyl-L-cysteinyl-[cysteine desulfurase] + AH2 = [ThiS sulfur-carrier protein]-C-terminal-Gly-aminoethanethioate + L-cysteinyl-[cysteine desulfurase] + A + AMP + 2 H(+). Its pathway is cofactor biosynthesis; thiamine diphosphate biosynthesis. Its function is as follows. Catalyzes the ATP-dependent transfer of a sulfur to tRNA to produce 4-thiouridine in position 8 of tRNAs, which functions as a near-UV photosensor. Also catalyzes the transfer of sulfur to the sulfur carrier protein ThiS, forming ThiS-thiocarboxylate. This is a step in the synthesis of thiazole, in the thiamine biosynthesis pathway. The sulfur is donated as persulfide by IscS. This is Probable tRNA sulfurtransferase from Staphylococcus aureus (strain N315).